The chain runs to 346 residues: 36.4 kDa proline-rich protein (346 aa).

Residues 11-144 are disordered; it reads PYPPSTPKHP…PFTPKPPSPI (134 aa). Pro residues-rich tracts occupy residues 25-42, 51-81, and 89-144; these read KVKP…PSTP, VKPP…PSTP, and QKPC…PSPI.

The chain is 36.4 kDa proline-rich protein (TPRP-F1) from Solanum lycopersicum (Tomato).